The following is a 469-amino-acid chain: Glutamate--tRNA ligase 1 (469 aa).

The short motif at 8 to 18 (PSPTGYLHIGG) is the 'HIGH' region element. The disordered stretch occupies residues 117–137 (TPRYDGTWRPEPGKELPPVPA). Residues 240-244 (KLSKR) carry the 'KMSKS' region motif. Residue lysine 243 participates in ATP binding.

Belongs to the class-I aminoacyl-tRNA synthetase family. Glutamate--tRNA ligase type 1 subfamily. In terms of assembly, monomer.

The protein resides in the cytoplasm. It catalyses the reaction tRNA(Glu) + L-glutamate + ATP = L-glutamyl-tRNA(Glu) + AMP + diphosphate. Catalyzes the attachment of glutamate to tRNA(Glu) in a two-step reaction: glutamate is first activated by ATP to form Glu-AMP and then transferred to the acceptor end of tRNA(Glu). This Aliarcobacter butzleri (strain RM4018) (Arcobacter butzleri) protein is Glutamate--tRNA ligase 1.